The primary structure comprises 166 residues: NADPH-dependent 7-cyano-7-deazaguanine reductase (166 aa).

Catalysis depends on cysteine 57, which acts as the Thioimide intermediate. Catalysis depends on aspartate 64, which acts as the Proton donor. Substrate is bound by residues 79-81 and 98-99; these read VES and HE.

This sequence belongs to the GTP cyclohydrolase I family. QueF type 1 subfamily.

It is found in the cytoplasm. The catalysed reaction is 7-aminomethyl-7-carbaguanine + 2 NADP(+) = 7-cyano-7-deazaguanine + 2 NADPH + 3 H(+). The protein operates within tRNA modification; tRNA-queuosine biosynthesis. Functionally, catalyzes the NADPH-dependent reduction of 7-cyano-7-deazaguanine (preQ0) to 7-aminomethyl-7-deazaguanine (preQ1). This chain is NADPH-dependent 7-cyano-7-deazaguanine reductase, found in Staphylococcus aureus (strain MRSA252).